Consider the following 199-residue polypeptide: FMN-dependent NADH:quinone oxidoreductase (199 aa).

Residues S9, 15–17 (SNS), and 95–98 (MYNF) each bind FMN.

Belongs to the azoreductase type 1 family. In terms of assembly, homodimer. It depends on FMN as a cofactor.

It catalyses the reaction 2 a quinone + NADH + H(+) = 2 a 1,4-benzosemiquinone + NAD(+). The enzyme catalyses N,N-dimethyl-1,4-phenylenediamine + anthranilate + 2 NAD(+) = 2-(4-dimethylaminophenyl)diazenylbenzoate + 2 NADH + 2 H(+). Quinone reductase that provides resistance to thiol-specific stress caused by electrophilic quinones. Its function is as follows. Also exhibits azoreductase activity. Catalyzes the reductive cleavage of the azo bond in aromatic azo compounds to the corresponding amines. The sequence is that of FMN-dependent NADH:quinone oxidoreductase from Aromatoleum aromaticum (strain DSM 19018 / LMG 30748 / EbN1) (Azoarcus sp. (strain EbN1)).